Consider the following 348-residue polypeptide: MAFFIASSPHAHNRRSTPDLMKWVAICALPGLLAQTYFFGWGTLIQLVFAIALAVTFEAAVMLLRKRPPVMALRDYSAVVTAWLLSVAIPPHSPWWILVIGMFFAIVIAKHLYGGLGQNPFNPAMVAYVVLLISFPVQMTSWNAPASLTAEATSFVDSFLMIFTGFNNEGLSLQQARLGIDGTTMATPLDAFKTALTAGNTASEALSQPQFSWLAGVGWEWVNLAYLIGGLVLIKQRVIQWHIPVAFLGSLTLFSLMFLMFTPGETASPTIHLLSGATMLGAFFIATDPVSASTTVKGRLVFGALIGGLVFIIRSWGGFPDGVAFAVLLANMCVPLIDYYTKPRTYGH.

The next 3 membrane-spanning stretches (helical) occupy residues 20-39, 72-91, and 120-140; these read LMKW…TYFF, ALRD…AIPP, and PFNP…VQMT. Residue Thr-187 is modified to FMN phosphoryl threonine. A run of 5 helical transmembrane segments spans residues 214–234, 241–261, 266–286, 300–320, and 321–341; these read LAGV…LVLI, WHIP…FLMF, TASP…FFIA, LVFG…GGFP, and DGVA…DYYT.

The protein belongs to the NqrB/RnfD family. The complex is composed of six subunits: RnfA, RnfB, RnfC, RnfD, RnfE and RnfG. FMN serves as cofactor.

It is found in the cell inner membrane. Functionally, part of a membrane-bound complex that couples electron transfer with translocation of ions across the membrane. This chain is Ion-translocating oxidoreductase complex subunit D, found in Vibrio atlanticus (strain LGP32) (Vibrio splendidus (strain Mel32)).